The following is a 549-amino-acid chain: Glucose-6-phosphate isomerase (549 aa).

Residue E353 is the Proton donor of the active site. Residues H384 and K510 contribute to the active site.

The protein belongs to the GPI family.

It is found in the cytoplasm. The enzyme catalyses alpha-D-glucose 6-phosphate = beta-D-fructose 6-phosphate. It participates in carbohydrate biosynthesis; gluconeogenesis. The protein operates within carbohydrate degradation; glycolysis; D-glyceraldehyde 3-phosphate and glycerone phosphate from D-glucose: step 2/4. Functionally, catalyzes the reversible isomerization of glucose-6-phosphate to fructose-6-phosphate. The protein is Glucose-6-phosphate isomerase of Mycolicibacterium smegmatis (Mycobacterium smegmatis).